The chain runs to 126 residues: NADH-quinone oxidoreductase subunit A (126 aa).

Helical transmembrane passes span phenylalanine 14–phenylalanine 34, phenylalanine 66–tryptophan 86, and isoleucine 96–valine 116.

The protein belongs to the complex I subunit 3 family. NDH-1 is composed of 13 different subunits. Subunits NuoA, H, J, K, L, M, N constitute the membrane sector of the complex.

Its subcellular location is the cell membrane. The enzyme catalyses a quinone + NADH + 5 H(+)(in) = a quinol + NAD(+) + 4 H(+)(out). NDH-1 shuttles electrons from NADH, via FMN and iron-sulfur (Fe-S) centers, to quinones in the respiratory chain. The immediate electron acceptor for the enzyme in this species is believed to be ubiquinone. Couples the redox reaction to proton translocation (for every two electrons transferred, four hydrogen ions are translocated across the cytoplasmic membrane), and thus conserves the redox energy in a proton gradient. The polypeptide is NADH-quinone oxidoreductase subunit A (Buchnera aphidicola subsp. Schizaphis graminum (strain Sg)).